The sequence spans 275 residues: NAD kinase (275 aa).

The Proton acceptor role is filled by Asp53. Residues 53 to 54 (DG), 129 to 130 (NE), Arg155, Asp157, and 168 to 173 (TAYNKS) contribute to the NAD(+) site.

Belongs to the NAD kinase family. The cofactor is a divalent metal cation.

Its subcellular location is the cytoplasm. It catalyses the reaction NAD(+) + ATP = ADP + NADP(+) + H(+). In terms of biological role, involved in the regulation of the intracellular balance of NAD and NADP, and is a key enzyme in the biosynthesis of NADP. Catalyzes specifically the phosphorylation on 2'-hydroxyl of the adenosine moiety of NAD to yield NADP. The protein is NAD kinase of Streptococcus agalactiae serotype Ia (strain ATCC 27591 / A909 / CDC SS700).